A 52-amino-acid polypeptide reads, in one-letter code: Large ribosomal subunit protein bL33 (52 aa).

It belongs to the bacterial ribosomal protein bL33 family.

The chain is Large ribosomal subunit protein bL33 from Helicobacter pylori (strain HPAG1).